Reading from the N-terminus, the 204-residue chain is Urease accessory protein UreG (204 aa).

Residue 11 to 18 (GPVGAGKT) participates in GTP binding.

Belongs to the SIMIBI class G3E GTPase family. UreG subfamily. As to quaternary structure, homodimer. UreD, UreF and UreG form a complex that acts as a GTP-hydrolysis-dependent molecular chaperone, activating the urease apoprotein by helping to assemble the nickel containing metallocenter of UreC. The UreE protein probably delivers the nickel.

The protein resides in the cytoplasm. In terms of biological role, facilitates the functional incorporation of the urease nickel metallocenter. This process requires GTP hydrolysis, probably effectuated by UreG. The polypeptide is Urease accessory protein UreG (Staphylococcus epidermidis (strain ATCC 35984 / DSM 28319 / BCRC 17069 / CCUG 31568 / BM 3577 / RP62A)).